A 181-amino-acid chain; its full sequence is Peptide deformylase (181 aa).

Fe cation is bound by residues Cys-103 and His-145. Residue Glu-146 is part of the active site. Position 149 (His-149) interacts with Fe cation.

It belongs to the polypeptide deformylase family. The cofactor is Fe(2+).

The catalysed reaction is N-terminal N-formyl-L-methionyl-[peptide] + H2O = N-terminal L-methionyl-[peptide] + formate. Removes the formyl group from the N-terminal Met of newly synthesized proteins. Requires at least a dipeptide for an efficient rate of reaction. N-terminal L-methionine is a prerequisite for activity but the enzyme has broad specificity at other positions. The protein is Peptide deformylase of Orientia tsutsugamushi (strain Ikeda) (Rickettsia tsutsugamushi).